Here is a 401-residue protein sequence, read N- to C-terminus: Nicotinate phosphoribosyltransferase (401 aa).

His221 is subject to Phosphohistidine; by autocatalysis.

The protein belongs to the NAPRTase family. Transiently phosphorylated on a His residue during the reaction cycle. Phosphorylation strongly increases the affinity for substrates and increases the rate of nicotinate D-ribonucleotide production. Dephosphorylation regenerates the low-affinity form of the enzyme, leading to product release.

It carries out the reaction nicotinate + 5-phospho-alpha-D-ribose 1-diphosphate + ATP + H2O = nicotinate beta-D-ribonucleotide + ADP + phosphate + diphosphate. Its pathway is cofactor biosynthesis; NAD(+) biosynthesis; nicotinate D-ribonucleotide from nicotinate: step 1/1. In terms of biological role, catalyzes the synthesis of beta-nicotinate D-ribonucleotide from nicotinate and 5-phospho-D-ribose 1-phosphate at the expense of ATP. The chain is Nicotinate phosphoribosyltransferase from Serratia proteamaculans (strain 568).